The chain runs to 548 residues: uncharacterized protein (548 aa).

Residues Lys8–Lys200 form the DhaL domain.

This is an uncharacterized protein from Staphylococcus aureus (strain bovine RF122 / ET3-1).